The following is a 353-amino-acid chain: UDP-xylose transporter 2 (353 aa).

A run of 10 helical transmembrane segments spans residues 7-27 (FQLG…SIVI), 31-51 (ALIS…HLLV), 75-95 (VLGF…SLGF), 100-120 (FYQM…TIFF), 132-152 (LVIL…LNML), 154-174 (SVLS…TNTI), 194-214 (AITL…QNVF), 224-244 (FFIV…FLVI), 250-270 (VTYQ…GYLL), and 280-300 (ILGI…CTLE). Residues 308–353 (TSTQLPQMDENEKDPLVSAENGSGLISDNGVQKQDPVWNSNKDFQA) are disordered. Positions 327-353 (ENGSGLISDNGVQKQDPVWNSNKDFQA) are enriched in polar residues. Ser-334 carries the post-translational modification Phosphoserine.

The protein belongs to the TPT transporter family. TPT (TC 2.A.7.9) subfamily. In terms of tissue distribution, ubiquitous.

It is found in the golgi apparatus membrane. Functionally, nucleotide-sugar transporter that transports UDP-xylose and UMP in a strict counter-exchange mode. This is UDP-xylose transporter 2 from Arabidopsis thaliana (Mouse-ear cress).